The chain runs to 148 residues: Suppressor APC domain-containing protein 1 (148 aa).

The segment at 120 to 148 (SRQQKGVTQPKEEMAQRGCTKGPRGPTRV) is disordered.

This chain is Suppressor APC domain-containing protein 1 (SAPCD1), found in Homo sapiens (Human).